Here is a 296-residue protein sequence, read N- to C-terminus: MKSNTLGDEGNPARLLIKVTRETLPQVKEKYPFLYLEKGRIEIDDSSIKWIDCDCNVVRLPVAMLNCILLGPGTTVTHEAVKVMAAANCGICWVGDDSLMFYASGQTPTSNTRNMTHQMKLAANPAKALEVARRLFAYRFPDANLENKTLPQMMGMEGLRVRKLYEEMAVKYKVGWKGRRFEPGKFEMSDTTNKILTASNAALYSIILSAVHSMGYSPHIGFIHSGSPLPFIYDLADLYKQQVSIDLAFSLTADMAGYYDRHKIASEFRKRVIEIDLLGKIGPDIETILGKKQCSS.

Mn(2+)-binding residues include glutamate 157, histidine 224, and aspartate 237.

The protein belongs to the CRISPR-associated endonuclease Cas1 family. As to quaternary structure, homodimer, forms a heterotetramer with a Cas2 homodimer. Mg(2+) is required as a cofactor. Mn(2+) serves as cofactor.

In terms of biological role, CRISPR (clustered regularly interspaced short palindromic repeat), is an adaptive immune system that provides protection against mobile genetic elements (viruses, transposable elements and conjugative plasmids). CRISPR clusters contain spacers, sequences complementary to antecedent mobile elements, and target invading nucleic acids. CRISPR clusters are transcribed and processed into CRISPR RNA (crRNA). Acts as a dsDNA endonuclease. Involved in the integration of spacer DNA into the CRISPR cassette. This Chlorobaculum tepidum (strain ATCC 49652 / DSM 12025 / NBRC 103806 / TLS) (Chlorobium tepidum) protein is CRISPR-associated endonuclease Cas1 2.